The sequence spans 186 residues: Alkyl hydroperoxide reductase AhpD (186 aa).

The active-site Proton donor is Cys-132. A disulfide bridge connects residues Cys-132 and Cys-135. The active-site Cysteine sulfenic acid (-SOH) intermediate is the Cys-135.

The protein belongs to the AhpD family.

It catalyses the reaction N(6)-[(R)-dihydrolipoyl]-L-lysyl-[lipoyl-carrier protein] + a hydroperoxide = N(6)-[(R)-lipoyl]-L-lysyl-[lipoyl-carrier protein] + an alcohol + H2O. In terms of biological role, antioxidant protein with alkyl hydroperoxidase activity. Required for the reduction of the AhpC active site cysteine residues and for the regeneration of the AhpC enzyme activity. In Anaeromyxobacter dehalogenans (strain 2CP-1 / ATCC BAA-258), this protein is Alkyl hydroperoxide reductase AhpD.